We begin with the raw amino-acid sequence, 87 residues long: Small ribosomal subunit protein bS20 (87 aa).

The disordered stretch occupies residues 1–27; it reads MANIKSAKKRAVQSEKRRKHNASRRSM.

It belongs to the bacterial ribosomal protein bS20 family.

Its function is as follows. Binds directly to 16S ribosomal RNA. The sequence is that of Small ribosomal subunit protein bS20 from Pectobacterium carotovorum subsp. carotovorum (strain PC1).